Here is a 426-residue protein sequence, read N- to C-terminus: tRNA modification GTPase MnmE (426 aa).

Residues Arg20, Glu77, and Met117 each contribute to the (6S)-5-formyl-5,6,7,8-tetrahydrofolate site. In terms of domain architecture, TrmE-type G spans 213 to 350 (GFEVAILGAP…LLTDIEGVLS (138 aa)). Asn223 contributes to the K(+) binding site. GTP contacts are provided by residues 223-228 (NAGKST), 242-248 (SDVPGTT), and 267-270 (DTAG). Ser227 serves as a coordination point for Mg(2+). Residues Ser242, Val244, and Thr247 each contribute to the K(+) site. Thr248 lines the Mg(2+) pocket. Position 426 (Lys426) interacts with (6S)-5-formyl-5,6,7,8-tetrahydrofolate.

This sequence belongs to the TRAFAC class TrmE-Era-EngA-EngB-Septin-like GTPase superfamily. TrmE GTPase family. Homodimer. Heterotetramer of two MnmE and two MnmG subunits. The cofactor is K(+).

It is found in the cytoplasm. Its function is as follows. Exhibits a very high intrinsic GTPase hydrolysis rate. Involved in the addition of a carboxymethylaminomethyl (cmnm) group at the wobble position (U34) of certain tRNAs, forming tRNA-cmnm(5)s(2)U34. The sequence is that of tRNA modification GTPase MnmE from Jannaschia sp. (strain CCS1).